The following is a 487-amino-acid chain: Meiotic recombination protein SPO11-4 (487 aa).

The tract at residues 1-56 (MDDSTDDDSYHPRKHYAYDRQVSSSRWRTSREYIRGPGPETHTTESAQDGQDPPAG) is disordered. A Topo IIA-type catalytic domain is found at 119-252 (KSRVEARKTL…LGIIAAEKGI (134 aa)). The O-(5'-phospho-DNA)-tyrosine intermediate role is filled by tyrosine 213. The Mg(2+) site is built by glutamate 301 and aspartate 353.

The protein belongs to the TOP6A family. Homodimer. Interacts with TOP6B. Requires Mg(2+) as cofactor.

Its subcellular location is the nucleus. It catalyses the reaction ATP-dependent breakage, passage and rejoining of double-stranded DNA.. In terms of biological role, required for meiotic recombination. Mediates DNA cleavage that forms the double-strand breaks (DSB) that initiate meiotic recombination. Possesses double-stranded DNA cleavage activity in vitro. The sequence is that of Meiotic recombination protein SPO11-4 (SPO11-4) from Oryza sativa subsp. japonica (Rice).